Reading from the N-terminus, the 313-residue chain is Ribosomal RNA small subunit methyltransferase H (313 aa).

S-adenosyl-L-methionine is bound by residues 33–35 (AGH), glutamate 52, phenylalanine 80, aspartate 101, and glutamine 108.

This sequence belongs to the methyltransferase superfamily. RsmH family.

It is found in the cytoplasm. It catalyses the reaction cytidine(1402) in 16S rRNA + S-adenosyl-L-methionine = N(4)-methylcytidine(1402) in 16S rRNA + S-adenosyl-L-homocysteine + H(+). Its function is as follows. Specifically methylates the N4 position of cytidine in position 1402 (C1402) of 16S rRNA. The polypeptide is Ribosomal RNA small subunit methyltransferase H (Spiroplasma kunkelii).